We begin with the raw amino-acid sequence, 1400 residues long: DNA-directed RNA polymerase subunit beta' (1400 aa).

Positions 71, 73, 86, and 89 each coordinate Zn(2+). Mg(2+)-binding residues include Asp-462, Asp-464, and Asp-466. Zn(2+) contacts are provided by Cys-811, Cys-885, Cys-892, and Cys-895.

Belongs to the RNA polymerase beta' chain family. The RNAP catalytic core consists of 2 alpha, 1 beta, 1 beta' and 1 omega subunit. When a sigma factor is associated with the core the holoenzyme is formed, which can initiate transcription. The cofactor is Mg(2+). Zn(2+) serves as cofactor.

The catalysed reaction is RNA(n) + a ribonucleoside 5'-triphosphate = RNA(n+1) + diphosphate. DNA-dependent RNA polymerase catalyzes the transcription of DNA into RNA using the four ribonucleoside triphosphates as substrates. The protein is DNA-directed RNA polymerase subunit beta' of Brucella canis (strain ATCC 23365 / NCTC 10854 / RM-666).